The sequence spans 693 residues: Protein-glutamine gamma-glutamyltransferase E (693 aa).

A2 is subject to N-acetylalanine. Y111 carries the post-translational modification Phosphotyrosine. T112 bears the Phosphothreonine mark. A222, N225, N227, D228, and N230 together coordinate Ca(2+). C273 is a catalytic residue. Residues D302, D304, N306, S308, and D325 each contribute to the Ca(2+) site. Active-site residues include H331 and D354. Positions 394, 416, 444, and 449 each coordinate Ca(2+).

It belongs to the transglutaminase superfamily. Transglutaminase family. In terms of assembly, consists of two polypeptide chains, which are synthesized as a precursor form of a single polypeptide. Ca(2+) is required as a cofactor. In terms of processing, activated by proteolytic processing. In vitro activation is commonly achieved by cleavage with dispase, a neutral bacterial protease. Dispase cleavage site was proposed to lie between Ser-470 and Ser-471 or between Pro-465 and Phe-466. Physiological activation may be catalyzed by CTSL and, to a lesser extent, by CTSS, but not by CTSB, CTSD nor CTSV.

It localises to the cytoplasm. It catalyses the reaction L-glutaminyl-[protein] + L-lysyl-[protein] = [protein]-L-lysyl-N(6)-5-L-glutamyl-[protein] + NH4(+). Catalyzes the calcium-dependent formation of isopeptide cross-links between glutamine and lysine residues in various proteins, as well as the conjugation of polyamines to proteins. Involved in the formation of the cornified envelope (CE), a specialized component consisting of covalent cross-links of proteins beneath the plasma membrane of terminally differentiated keratinocytes. Catalyzes small proline-rich proteins (SPRR1 and SPRR2) and LOR cross-linking to form small interchain oligomers, which are further cross-linked by TGM1 onto the growing CE scaffold. In hair follicles, involved in cross-linking structural proteins to hardening the inner root sheath. This Homo sapiens (Human) protein is Protein-glutamine gamma-glutamyltransferase E (TGM3).